A 155-amino-acid polypeptide reads, in one-letter code: 6,7-dimethyl-8-ribityllumazine synthase (155 aa).

5-amino-6-(D-ribitylamino)uracil contacts are provided by residues Phe-24, 58-60 (AFE), and 82-84 (AII). A (2S)-2-hydroxy-3-oxobutyl phosphate-binding site is contributed by 87–88 (ST). The active-site Proton donor is His-90. Phe-115 lines the 5-amino-6-(D-ribitylamino)uracil pocket. Position 129 (Arg-129) interacts with (2S)-2-hydroxy-3-oxobutyl phosphate.

It belongs to the DMRL synthase family.

The enzyme catalyses (2S)-2-hydroxy-3-oxobutyl phosphate + 5-amino-6-(D-ribitylamino)uracil = 6,7-dimethyl-8-(1-D-ribityl)lumazine + phosphate + 2 H2O + H(+). It participates in cofactor biosynthesis; riboflavin biosynthesis; riboflavin from 2-hydroxy-3-oxobutyl phosphate and 5-amino-6-(D-ribitylamino)uracil: step 1/2. In terms of biological role, catalyzes the formation of 6,7-dimethyl-8-ribityllumazine by condensation of 5-amino-6-(D-ribitylamino)uracil with 3,4-dihydroxy-2-butanone 4-phosphate. This is the penultimate step in the biosynthesis of riboflavin. This Chlorobium phaeobacteroides (strain BS1) protein is 6,7-dimethyl-8-ribityllumazine synthase.